A 453-amino-acid chain; its full sequence is Potassium/proton antiporter CemA (453 aa).

Transmembrane regions (helical) follow at residues 235–255 (YMACLIFLPWVFSTICKIIFL), 328–348 (ICTILNLLTDWISITCLACLL), 378–398 (ILLLTDLCIGFHSPHGWEIII), and 414–434 (VSCFVSTFPVILDTVLKYWIF).

This sequence belongs to the CemA family.

The protein localises to the plastid. It is found in the chloroplast inner membrane. It catalyses the reaction K(+)(in) + H(+)(out) = K(+)(out) + H(+)(in). Contributes to K(+)/H(+) antiport activity by supporting proton efflux to control proton extrusion and homeostasis in chloroplasts in a light-dependent manner to modulate photosynthesis. Prevents excessive induction of non-photochemical quenching (NPQ) under continuous-light conditions. Indirectly promotes efficient inorganic carbon uptake into chloroplasts. This is Potassium/proton antiporter CemA from Zygnema circumcarinatum (Green alga).